We begin with the raw amino-acid sequence, 421 residues long: tRNA(Ile)-lysidine synthase (421 aa).

Residue Ser-26 to Ser-31 coordinates ATP.

This sequence belongs to the tRNA(Ile)-lysidine synthase family.

It localises to the cytoplasm. The catalysed reaction is cytidine(34) in tRNA(Ile2) + L-lysine + ATP = lysidine(34) in tRNA(Ile2) + AMP + diphosphate + H(+). In terms of biological role, ligates lysine onto the cytidine present at position 34 of the AUA codon-specific tRNA(Ile) that contains the anticodon CAU, in an ATP-dependent manner. Cytidine is converted to lysidine, thus changing the amino acid specificity of the tRNA from methionine to isoleucine. The polypeptide is tRNA(Ile)-lysidine synthase (Streptococcus thermophilus (strain CNRZ 1066)).